We begin with the raw amino-acid sequence, 414 residues long: Tetraspanning orphan receptor (414 aa).

The Cytoplasmic segment spans residues 1 to 28 (MPRASALLTSDPRHQFTCCLCLHVRTGT). A helical membrane pass occupies residues 29–49 (IIFGITQIIIQLIFISFLFLM). The Extracellular portion of the chain corresponds to 50–166 (TFNPRLFPED…EIKIRQFSPY (117 aa)). The chain crosses the membrane as a helical span at residues 167–187 (IAVCVTTFSLAFCCFMVHGAI). At 188–194 (TRQPTHL) the chain is on the cytoplasmic side. A helical membrane pass occupies residues 195–215 (LPFFFIQVFDLIICLIHILGF). At 216-241 (MSSTSDIRLMIHTKTGPIYIKSTGLA) the chain is on the extracellular side. Residues 242-262 (FIILSISCMMLAFKAYCLGMV) traverse the membrane as a helical segment. The Cytoplasmic segment spans residues 263 to 414 (WDCYKYLMLN…TSTPSNVHPC (152 aa)). The interval 306-328 (LTGNLDSANESNTRAHPDPVTYD) is disordered.

As to quaternary structure, interacts (via N-terminal extracellular domain) with human C2a. Phosphorylated on tyrosine residues.

It is found in the cell membrane. Its function is as follows. Cell surface receptor that binds to human complement C2a protein. This results in inhibition of the classical and lectin pathways of complement activation, probably due to interference with binding of C2a to C4b and interference with cleavage by C1 or MASP2 such that C3 convertase cannot be formed. This infers resistance to complement-mediated cell lysis, allowing parasite survival and infection. In Schistosoma japonicum (Blood fluke), this protein is Tetraspanning orphan receptor.